The primary structure comprises 79 residues: UPF0654 protein C11D3.01c (79 aa).

Residues 1-79 are disordered; it reads MPNPGNVIGG…RAQEELENLE (79 aa). The segment covering 22 to 45 has biased composition (basic and acidic residues); the sequence is EETKQREKEYLEEHEGEVGEEHQK.

Belongs to the UPF0654 (con-6) family.

The protein is UPF0654 protein C11D3.01c of Schizosaccharomyces pombe (strain 972 / ATCC 24843) (Fission yeast).